A 673-amino-acid chain; its full sequence is eEF1A lysine and N-terminal methyltransferase homolog (673 aa).

It belongs to the methyltransferase superfamily.

It carries out the reaction L-lysyl-[protein] + S-adenosyl-L-methionine = N(6)-methyl-L-lysyl-[protein] + S-adenosyl-L-homocysteine + H(+). The enzyme catalyses N(6)-methyl-L-lysyl-[protein] + S-adenosyl-L-methionine = N(6),N(6)-dimethyl-L-lysyl-[protein] + S-adenosyl-L-homocysteine + H(+). It catalyses the reaction N-terminal glycyl-L-lysyl-L-glutamyl-[protein] + 3 S-adenosyl-L-methionine = N-terminal N,N,N-trimethyl-glycyl-L-lysyl-L-glutamyl-[protein] + 3 S-adenosyl-L-homocysteine + 3 H(+). Dual methyltransferase. It catalyzes N-terminal methylation of target proteins via its C-terminus. It catalyzes dimethylation on lysine residues of target proteins via its N-terminus. The polypeptide is eEF1A lysine and N-terminal methyltransferase homolog (Drosophila pseudoobscura pseudoobscura (Fruit fly)).